A 754-amino-acid polypeptide reads, in one-letter code: 5-methyltetrahydropteroyltriglutamate--homocysteine methyltransferase (754 aa).

Residues 17 to 20 and lysine 117 contribute to the 5-methyltetrahydropteroyltri-L-glutamate site; that span reads RELK. L-homocysteine-binding positions include 431–433 and glutamate 484; that span reads IGS. Residues 431–433 and glutamate 484 each bind L-methionine; that span reads IGS. 5-methyltetrahydropteroyltri-L-glutamate is bound by residues 515-516 and tryptophan 561; that span reads RC. Residue aspartate 599 coordinates L-homocysteine. Aspartate 599 provides a ligand contact to L-methionine. Residue glutamate 605 participates in 5-methyltetrahydropteroyltri-L-glutamate binding. Residues histidine 641, cysteine 643, and glutamate 665 each coordinate Zn(2+). Histidine 694 acts as the Proton donor in catalysis. Cysteine 726 contributes to the Zn(2+) binding site.

It belongs to the vitamin-B12 independent methionine synthase family. Zn(2+) serves as cofactor.

It carries out the reaction 5-methyltetrahydropteroyltri-L-glutamate + L-homocysteine = tetrahydropteroyltri-L-glutamate + L-methionine. The protein operates within amino-acid biosynthesis; L-methionine biosynthesis via de novo pathway; L-methionine from L-homocysteine (MetE route): step 1/1. Catalyzes the transfer of a methyl group from 5-methyltetrahydrofolate to homocysteine resulting in methionine formation. The chain is 5-methyltetrahydropteroyltriglutamate--homocysteine methyltransferase from Salmonella arizonae (strain ATCC BAA-731 / CDC346-86 / RSK2980).